Consider the following 278-residue polypeptide: Pre-hexon-linking protein VIII (278 aa).

Positions 114 to 199 are excised as a propeptide; that stretch reads SPSLLSGGAS…ILRYRRLGQQ (86 aa).

Belongs to the adenoviridae hexon-linking protein family. As to quaternary structure, interacts with the peripentonal hexons as well as the hexons in the facets. Part of a complex composed of the core-capsid bridging protein, the endosome lysis protein VI and the hexon-linking protein VIII; these interactions bridge the virus core to the capsid. Post-translationally, cleaved by the viral protease during virion maturation. May cause the middle segment to be shed from the capsid.

The protein localises to the virion. The protein resides in the host nucleus. Structural component of the virion that acts as a cement protein on the capsid interior and which glue the peripentonal hexons and group-of-nine hexons together. The polypeptide is Pre-hexon-linking protein VIII (Pantherophis guttatus (Corn snake)).